The primary structure comprises 125 residues: uncharacterized protein (125 aa).

Disordered stretches follow at residues 1–27 (MNKTVGPPTITPTGLSGGMNSTTGSSS) and 76–125 (NKNN…RFKK). Over residues 18 to 27 (GMNSTTGSSS) the composition is skewed to low complexity.

This is an uncharacterized protein from Dictyostelium discoideum (Social amoeba).